The following is a 243-amino-acid chain: Adenosylcobinamide-GDP ribazoletransferase (243 aa).

The next 5 membrane-spanning stretches (helical) occupy residues 31 to 51 (LLWY…AHLL), 61 to 81 (AAII…DGLA), 109 to 129 (IAVV…LSLL), 134 to 154 (GIYL…LLAT), and 188 to 208 (LLLG…FVWL).

This sequence belongs to the CobS family. It depends on Mg(2+) as a cofactor.

The protein localises to the cell inner membrane. The catalysed reaction is alpha-ribazole + adenosylcob(III)inamide-GDP = adenosylcob(III)alamin + GMP + H(+). It carries out the reaction alpha-ribazole 5'-phosphate + adenosylcob(III)inamide-GDP = adenosylcob(III)alamin 5'-phosphate + GMP + H(+). It participates in cofactor biosynthesis; adenosylcobalamin biosynthesis; adenosylcobalamin from cob(II)yrinate a,c-diamide: step 7/7. Its function is as follows. Joins adenosylcobinamide-GDP and alpha-ribazole to generate adenosylcobalamin (Ado-cobalamin). Also synthesizes adenosylcobalamin 5'-phosphate from adenosylcobinamide-GDP and alpha-ribazole 5'-phosphate. The chain is Adenosylcobinamide-GDP ribazoletransferase from Ectopseudomonas mendocina (strain ymp) (Pseudomonas mendocina).